Consider the following 428-residue polypeptide: Peptidase B (428 aa).

Mn(2+) contacts are provided by K195 and D200. Residue K207 is part of the active site. Positions 218, 277, and 279 each coordinate Mn(2+). Residue R281 is part of the active site.

The protein belongs to the peptidase M17 family. As to quaternary structure, homohexamer. Mn(2+) serves as cofactor.

The protein localises to the cytoplasm. It carries out the reaction Release of an N-terminal amino acid, Xaa, from a peptide or arylamide. Xaa is preferably Glu or Asp but may be other amino acids, including Leu, Met, His, Cys and Gln.. In terms of biological role, probably plays an important role in intracellular peptide degradation. The polypeptide is Peptidase B (Cronobacter sakazakii (strain ATCC BAA-894) (Enterobacter sakazakii)).